The following is a 150-amino-acid chain: uncharacterized protein (150 aa).

4 helical membrane passes run 32 to 52, 64 to 84, 94 to 114, and 123 to 143; these read ILYG…AVSL, FNWL…FISG, IGAL…YLGF, and LIFH…GVNM.

It is found in the cell membrane. This is an uncharacterized protein from Bacillus subtilis (strain 168).